A 214-amino-acid polypeptide reads, in one-letter code: Probable adenylyl-sulfate kinase (214 aa).

An ATP-binding site is contributed by glycine 13–threonine 20. Serine 87 functions as the Phosphoserine intermediate in the catalytic mechanism. Residues tryptophan 174–alanine 199 are disordered.

It belongs to the APS kinase family.

It carries out the reaction adenosine 5'-phosphosulfate + ATP = 3'-phosphoadenylyl sulfate + ADP + H(+). The protein operates within sulfur metabolism; hydrogen sulfide biosynthesis; sulfite from sulfate: step 2/3. In terms of biological role, catalyzes the synthesis of activated sulfate. In Pseudomonas aeruginosa, this protein is Probable adenylyl-sulfate kinase.